The sequence spans 467 residues: Coiled-coil domain-containing protein 174 (467 aa).

Disordered stretches follow at residues 40–77 (VFGK…EEQK) and 124–162 (EMEA…SEEW). The stretch at 63-99 (NRAEKDAEQKIEEQKTLDKAREKLEEKAKLYEKMTKG) forms a coiled coil. 2 stretches are compositionally biased toward basic and acidic residues: residues 64–77 (RAEK…EEQK) and 124–139 (EMEA…KAGE). A Phosphoserine modification is found at Ser197. Positions 267-309 (LEMLREQTTDQRTKRENIKEKRKAILEARLAKLRQKKMKKSKE) form a coiled coil. 2 disordered regions span residues 299–363 (LRQK…HIRE) and 378–453 (RQSD…TVTF). A compositionally biased stretch (pro residues) spans 324-336 (PLPPEPEAVPTPR). Composition is skewed to basic and acidic residues over residues 348 to 363 (VQER…HIRE) and 378 to 389 (RQSDLRAERDPE). Positions 425-437 (PDQSHGPSPEHTS) are enriched in polar residues. Residues 439–448 (TPAPDNPPQA) are compositionally biased toward pro residues.

As to expression, widely expressed.

The protein resides in the nucleus. Its function is as follows. Probably involved in neuronal development. In Homo sapiens (Human), this protein is Coiled-coil domain-containing protein 174 (CCDC174).